Consider the following 390-residue polypeptide: T-cell surface glycoprotein CD1e, membrane-associated (390 aa).

The first 14 residues, M1 to C14, serve as a signal peptide directing secretion. A propeptide spans H15–A33 (removed in sCD1e). Residues N49 and N70 are each glycosylated (N-linked (GlcNAc...) asparagine). 2 disulfide bridges follow: C131/C194 and C234/C288. The region spanning P215 to G306 is the Ig-like domain. A helical membrane pass occupies residues G305 to L325.

As to quaternary structure, heterodimer with B2M (beta-2-microglobulin). The association with B2M appears to be facilitated by the presence of the propeptide. In terms of processing, mono-ubiquitinated. Proteolytically cleaved in endosomes to yield a soluble form.

The protein localises to the golgi apparatus membrane. Its subcellular location is the early endosome. It localises to the late endosome. It is found in the lysosome lumen. Functionally, T-cell surface glycoprotein CD1e, soluble is required for the presentation of glycolipid antigens on the cell surface. The membrane-associated form is not active. The sequence is that of T-cell surface glycoprotein CD1e, membrane-associated (CD1E) from Cavia porcellus (Guinea pig).